The following is a 158-amino-acid chain: D-aminoacyl-tRNA deacylase (158 aa).

A Gly-cisPro motif, important for rejection of L-amino acids motif is present at residues 138 to 139 (GP).

It belongs to the DTD family. As to quaternary structure, homodimer.

It is found in the cytoplasm. The catalysed reaction is glycyl-tRNA(Ala) + H2O = tRNA(Ala) + glycine + H(+). It catalyses the reaction a D-aminoacyl-tRNA + H2O = a tRNA + a D-alpha-amino acid + H(+). In terms of biological role, an aminoacyl-tRNA editing enzyme that deacylates mischarged D-aminoacyl-tRNAs. Hydrolyzes correctly charged, achiral, glycyl-tRNA(Gly). Deacylates mischarged endogenous and E.coli glycyl-tRNA(Ala), protecting cells against glycine mischarging by AlaRS. Acts via tRNA-based rather than protein-based catalysis; rejects L-amino acids rather than detecting D-amino acids in the active site. By recycling D-aminoacyl-tRNA to D-amino acids and free tRNA molecules, this enzyme counteracts the toxicity associated with the formation of D-aminoacyl-tRNA entities in vivo and helps enforce protein L-homochirality. The polypeptide is D-aminoacyl-tRNA deacylase (Drosophila melanogaster (Fruit fly)).